We begin with the raw amino-acid sequence, 127 residues long: Membrane-bound lysozyme inhibitor of C-type lysozyme (127 aa).

Positions 1–18 are cleaved as a signal peptide; the sequence is MKKALWLLLAAVPVVLVA. The N-palmitoyl cysteine moiety is linked to residue Cys19. Residue Cys19 is the site of S-diacylglycerol cysteine attachment. An intrachain disulfide couples Cys51 to Cys124.

It belongs to the MliC family. Type 2 subfamily. As to quaternary structure, homodimer.

It localises to the cell outer membrane. In terms of biological role, specifically inhibits C-type lysozymes. The chain is Membrane-bound lysozyme inhibitor of C-type lysozyme from Pseudomonas aeruginosa (strain ATCC 15692 / DSM 22644 / CIP 104116 / JCM 14847 / LMG 12228 / 1C / PRS 101 / PAO1).